A 163-amino-acid polypeptide reads, in one-letter code: Nucleotide-binding protein CJE0423 (163 aa).

Belongs to the YajQ family.

In terms of biological role, nucleotide-binding protein. The polypeptide is Nucleotide-binding protein CJE0423 (Campylobacter jejuni (strain RM1221)).